The chain runs to 400 residues: Chaperone protein DnaJ (400 aa).

Residues 4–69 enclose the J domain; that stretch reads DYYETLGVTR…DKRRRYDQFG (66 aa). Residues 156 to 237 form a CR-type zinc finger; sequence GVEKTLKVKR…CYGEGIKLGE (82 aa). Zn(2+) contacts are provided by Cys-169, Cys-172, Cys-185, Cys-188, Cys-211, Cys-214, Cys-225, and Cys-228. 4 CXXCXGXG motif repeats span residues 169–176, 185–192, 211–218, and 225–232; these read CEVCNGTG, CQTCHGSG, CPTCGGEG, and CTACYGEG.

This sequence belongs to the DnaJ family. Homodimer. Requires Zn(2+) as cofactor.

It is found in the cytoplasm. Participates actively in the response to hyperosmotic and heat shock by preventing the aggregation of stress-denatured proteins and by disaggregating proteins, also in an autonomous, DnaK-independent fashion. Unfolded proteins bind initially to DnaJ; upon interaction with the DnaJ-bound protein, DnaK hydrolyzes its bound ATP, resulting in the formation of a stable complex. GrpE releases ADP from DnaK; ATP binding to DnaK triggers the release of the substrate protein, thus completing the reaction cycle. Several rounds of ATP-dependent interactions between DnaJ, DnaK and GrpE are required for fully efficient folding. Also involved, together with DnaK and GrpE, in the DNA replication of plasmids through activation of initiation proteins. The protein is Chaperone protein DnaJ of Chlorobium chlorochromatii (strain CaD3).